The chain runs to 294 residues: Large ribosomal subunit protein uL18A (294 aa).

Phosphoserine is present on Ser-10. A Phosphotyrosine modification is found at Tyr-12. Residue Ser-81 is modified to Phosphoserine.

It belongs to the universal ribosomal protein uL18 family. Component of the large ribosomal subunit (LSU). Mature yeast ribosomes consist of a small (40S) and a large (60S) subunit. The 40S small subunit contains 1 molecule of ribosomal RNA (18S rRNA) and 33 different proteins (encoded by 57 genes). The large 60S subunit contains 3 rRNA molecules (25S, 5.8S and 5S rRNA) and 46 different proteins (encoded by 81 genes). Component of a hexameric 5S RNP precursor complex, composed of 5S RNA, rrs1, rpf2, rpl5a/rpl5b, rpl11a/rpl11b and syo1; this complex acts as a precursor for ribosome assembly. rpl5a/rpl5b/uL18 forms a heterotrimeric complex with syo1 and rpl11a/rpl11b/uL5. Interaction of this complex with KAP104 allows the nuclear import of the heterotrimer.

It is found in the cytoplasm. The protein localises to the nucleus. Its function is as follows. Component of the ribosome, a large ribonucleoprotein complex responsible for the synthesis of proteins in the cell. The small ribosomal subunit (SSU) binds messenger RNAs (mRNAs) and translates the encoded message by selecting cognate aminoacyl-transfer RNA (tRNA) molecules. The large subunit (LSU) contains the ribosomal catalytic site termed the peptidyl transferase center (PTC), which catalyzes the formation of peptide bonds, thereby polymerizing the amino acids delivered by tRNAs into a polypeptide chain. The nascent polypeptides leave the ribosome through a tunnel in the LSU and interact with protein factors that function in enzymatic processing, targeting, and the membrane insertion of nascent chains at the exit of the ribosomal tunnel. The chain is Large ribosomal subunit protein uL18A (rpl501) from Schizosaccharomyces pombe (strain 972 / ATCC 24843) (Fission yeast).